We begin with the raw amino-acid sequence, 119 residues long: Fluoride-specific ion channel FluC (119 aa).

Helical transmembrane passes span Ile-5–Ala-25, Leu-30–Phe-50, Trp-59–Leu-79, and Ser-92–Leu-112. Gly-69 and Thr-72 together coordinate Na(+).

It belongs to the fluoride channel Fluc/FEX (TC 1.A.43) family.

It is found in the cell inner membrane. The catalysed reaction is fluoride(in) = fluoride(out). Its activity is regulated as follows. Na(+) is not transported, but it plays an essential structural role and its presence is essential for fluoride channel function. In terms of biological role, fluoride-specific ion channel. Important for reducing fluoride concentration in the cell, thus reducing its toxicity. In Neisseria meningitidis serogroup A / serotype 4A (strain DSM 15465 / Z2491), this protein is Fluoride-specific ion channel FluC.